The chain runs to 270 residues: 5'-AMP-activated protein kinase subunit beta-1 (270 aa).

Residues 1–43 (MGNTSSERAALERHGGHKTPRRDSSGGTKDGDRPKILMDSPED) form a disordered region. Glycine 2 carries N-myristoyl glycine lipidation. The residue at position 4 (threonine 4) is a Phosphothreonine. Residues serine 5 and serine 6 each carry the phosphoserine modification. Threonine 19 is subject to Phosphothreonine. Positions 21–36 (RRDSSGGTKDGDRPKI) are enriched in basic and acidic residues. Serine 24 and serine 25 each carry phosphoserine; by autocatalysis. 4 positions are modified to phosphoserine: serine 40, serine 96, serine 101, and serine 108. Residues 68–163 (EVNDKAPAQA…QVKKTDFEVF (96 aa)) are glycogen-binding domain. Residue threonine 148 is modified to Phosphothreonine. Serine 182 is subject to Phosphoserine.

It belongs to the 5'-AMP-activated protein kinase beta subunit family. As to quaternary structure, AMPK is a heterotrimer of an alpha catalytic subunit (PRKAA1 or PRKAA2), a beta (PRKAB1 or PRKAB2) and a gamma non-catalytic subunits (PRKAG1, PRKAG2 or PRKAG3). Interacts with FNIP1 and FNIP2. Post-translationally, phosphorylated when associated with the catalytic subunit (PRKAA1 or PRKAA2). Phosphorylated by ULK1; leading to negatively regulate AMPK activity and suggesting the existence of a regulatory feedback loop between ULK1 and AMPK.

In terms of biological role, non-catalytic subunit of AMP-activated protein kinase (AMPK), an energy sensor protein kinase that plays a key role in regulating cellular energy metabolism. In response to reduction of intracellular ATP levels, AMPK activates energy-producing pathways and inhibits energy-consuming processes: inhibits protein, carbohydrate and lipid biosynthesis, as well as cell growth and proliferation. AMPK acts via direct phosphorylation of metabolic enzymes, and by longer-term effects via phosphorylation of transcription regulators. Also acts as a regulator of cellular polarity by remodeling the actin cytoskeleton; probably by indirectly activating myosin. Beta non-catalytic subunit acts as a scaffold on which the AMPK complex assembles, via its C-terminus that bridges alpha (PRKAA1 or PRKAA2) and gamma subunits (PRKAG1, PRKAG2 or PRKAG3). This chain is 5'-AMP-activated protein kinase subunit beta-1 (PRKAB1), found in Homo sapiens (Human).